An 88-amino-acid chain; its full sequence is FXYD domain-containing ion transport regulator 3 (88 aa).

The not cleaved signal peptide spans 1–20 (MQEVVLSLLVLLAGLPTLDA). Residues 1-38 (MQEVVLSLLVLLAGLPTLDANDPENKNDPFYYDWYSLR) are Extracellular-facing. The chain crosses the membrane as a helical span at residues 39 to 59 (VGGLICAGILCALGIIVLMSG). Over 60–88 (KCKCKFRQKPSHRPGEGPPLITPGSAHNC) the chain is Cytoplasmic. The tract at residues 67–88 (QKPSHRPGEGPPLITPGSAHNC) is disordered.

The protein belongs to the FXYD family. In terms of assembly, regulatory subunit of the sodium/potassium-transporting ATPase which is composed of a catalytic alpha subunit, a non-catalytic beta subunit and an additional regulatory subunit. Interacts with catalytic alpha subunit ATP1A1. Also interacts with non-catalytic beta subunit ATP1B1. Interacts with the ATP1A1-ATP1B1, ATP1A2-ATP1B1 and ATP1A3-ATP1B1 NKA isozymes. Post-translationally, glutathionylated. In terms of tissue distribution, expressed at high levels in heart, skeletal muscle and liver with low levels of expression in breast, brain, lung, stomach and colon. In the gastric gland, mainly expressed in the mucus cells forming the upper part of the gland and is absent from the parietal cells.

The protein resides in the cell membrane. Its function is as follows. Associates with and regulates the activity of the sodium/potassium-transporting ATPase (NKA) which transports Na(+) out of the cell and K(+) into the cell. Reduces glutathionylation of the NKA beta-1 subunit ATP1B1, thus reversing glutathionylation-mediated inhibition of ATP1B1. Induces a hyperpolarization-activated chloride current when expressed in Xenopus oocytes. The chain is FXYD domain-containing ion transport regulator 3 (Fxyd3) from Mus musculus (Mouse).